The following is a 511-amino-acid chain: Maturase K (511 aa).

Belongs to the intron maturase 2 family. MatK subfamily.

Its subcellular location is the plastid. It localises to the chloroplast. Functionally, usually encoded in the trnK tRNA gene intron. Probably assists in splicing its own and other chloroplast group II introns. This Hordeum vulgare (Barley) protein is Maturase K.